Here is a 241-residue protein sequence, read N- to C-terminus: Carboxy-S-adenosyl-L-methionine synthase (241 aa).

S-adenosyl-L-methionine-binding positions include tyrosine 38, 63–65 (GCS), 88–89 (DN), 116–117 (DI), asparagine 131, and arginine 198.

Belongs to the class I-like SAM-binding methyltransferase superfamily. Cx-SAM synthase family. As to quaternary structure, homodimer.

The enzyme catalyses prephenate + S-adenosyl-L-methionine = carboxy-S-adenosyl-L-methionine + 3-phenylpyruvate + H2O. Its function is as follows. Catalyzes the conversion of S-adenosyl-L-methionine (SAM) to carboxy-S-adenosyl-L-methionine (Cx-SAM). This Pasteurella multocida (strain Pm70) protein is Carboxy-S-adenosyl-L-methionine synthase.